A 290-amino-acid polypeptide reads, in one-letter code: Diaminopimelate epimerase (290 aa).

Asn17, Gln49, and Asn69 together coordinate substrate. Cys78 functions as the Proton donor in the catalytic mechanism. Substrate is bound by residues 79–80 (GN), Asn166, Asn199, and 217–218 (ER). The active-site Proton acceptor is Cys226. 227–228 (GS) contributes to the substrate binding site.

The protein belongs to the diaminopimelate epimerase family. As to quaternary structure, homodimer.

The protein localises to the cytoplasm. It carries out the reaction (2S,6S)-2,6-diaminopimelate = meso-2,6-diaminopimelate. Its pathway is amino-acid biosynthesis; L-lysine biosynthesis via DAP pathway; DL-2,6-diaminopimelate from LL-2,6-diaminopimelate: step 1/1. Its function is as follows. Catalyzes the stereoinversion of LL-2,6-diaminopimelate (L,L-DAP) to meso-diaminopimelate (meso-DAP), a precursor of L-lysine and an essential component of the bacterial peptidoglycan. This chain is Diaminopimelate epimerase, found in Afipia carboxidovorans (strain ATCC 49405 / DSM 1227 / KCTC 32145 / OM5) (Oligotropha carboxidovorans).